Consider the following 196-residue polypeptide: Peptidyl-tRNA hydrolase (196 aa).

Residue His-15 participates in tRNA binding. Catalysis depends on His-20, which acts as the Proton acceptor. TRNA contacts are provided by Tyr-66, Asn-68, and Asn-114.

The protein belongs to the PTH family. Monomer.

Its subcellular location is the cytoplasm. It catalyses the reaction an N-acyl-L-alpha-aminoacyl-tRNA + H2O = an N-acyl-L-amino acid + a tRNA + H(+). In terms of biological role, hydrolyzes ribosome-free peptidyl-tRNAs (with 1 or more amino acids incorporated), which drop off the ribosome during protein synthesis, or as a result of ribosome stalling. Functionally, catalyzes the release of premature peptidyl moieties from peptidyl-tRNA molecules trapped in stalled 50S ribosomal subunits, and thus maintains levels of free tRNAs and 50S ribosomes. The polypeptide is Peptidyl-tRNA hydrolase (Polynucleobacter necessarius subsp. necessarius (strain STIR1)).